Here is a 215-residue protein sequence, read N- to C-terminus: Fibroblast growth factor 10 (215 aa).

The N-terminal stretch at 1-36 (MWKWILTHCASAFPHLPGCCCCFLLLFLVSSVPVTC) is a signal peptide. The segment at 49–73 (TNSSSSSSSSSSSSSFSSPSSAGRH) is disordered. Asparagine 50 carries an N-linked (GlcNAc...) asparagine glycan. Residues 51-69 (SSSSSSSSSSSSSFSSPSS) are compositionally biased toward low complexity. Asparagine 203 carries N-linked (GlcNAc...) asparagine glycosylation.

This sequence belongs to the heparin-binding growth factors family. As to quaternary structure, interacts with FGFR1 and FGFR2. Interacts with FGFBP1. Preferentially expressed in the lung in adults.

It localises to the secreted. Its function is as follows. Plays an important role in the regulation of embryonic development, cell proliferation and cell differentiation. Required for normal branching morphogenesis. May play a role in wound healing. In Rattus norvegicus (Rat), this protein is Fibroblast growth factor 10 (Fgf10).